The chain runs to 559 residues: Oxygen-dependent choline dehydrogenase (559 aa).

FAD is bound at residue 4 to 33 (DYIIIGAGSAGNVLATRLTEESDVSVLLLE). The interval 182–201 (EGFGPMDRTVTPKGRRASTA) is disordered. Histidine 471 (proton acceptor) is an active-site residue.

The protein belongs to the GMC oxidoreductase family. FAD serves as cofactor.

The enzyme catalyses choline + A = betaine aldehyde + AH2. It carries out the reaction betaine aldehyde + NAD(+) + H2O = glycine betaine + NADH + 2 H(+). It participates in amine and polyamine biosynthesis; betaine biosynthesis via choline pathway; betaine aldehyde from choline (cytochrome c reductase route): step 1/1. Functionally, involved in the biosynthesis of the osmoprotectant glycine betaine. Catalyzes the oxidation of choline to betaine aldehyde and betaine aldehyde to glycine betaine at the same rate. The polypeptide is Oxygen-dependent choline dehydrogenase (Pectobacterium carotovorum subsp. carotovorum (strain PC1)).